Consider the following 157-residue polypeptide: Small ribosomal subunit protein uS7 (157 aa).

Belongs to the universal ribosomal protein uS7 family. As to quaternary structure, part of the 30S ribosomal subunit. Contacts proteins S9 and S11.

Functionally, one of the primary rRNA binding proteins, it binds directly to 16S rRNA where it nucleates assembly of the head domain of the 30S subunit. Is located at the subunit interface close to the decoding center, probably blocks exit of the E-site tRNA. The chain is Small ribosomal subunit protein uS7 from Chlamydia felis (strain Fe/C-56) (Chlamydophila felis).